Reading from the N-terminus, the 612-residue chain is MSDKSDLKAELERKKQRLAQIREEKKRKEEERKKKETDQKKEAAVSVQEESDLEKKRREAEALLQSMGLTTDSPIVPPPMSPSSKSVSTPSEAGSQDSGDGAVGSRRGPIKLGMAKITQVDFPPREIVTYTKETQTPVTAQPKEDEEEEDDVATPKPPVEPEEEKTLKKDEENDSKAPPHELTEEEKQQILHSEEFLSFFDHSTRIVERALSEQINIFFDYSGRDLEDKEGEIQAGAKLSLNRQFFDERWSKHRVVSCLDWSSQYPELLVASYNNNEEAPHEPDGVALVWNMKYKKTTPEYVFHCQSAVMSATFAKFHPNLVVGGTYSGQIVLWDNRSNKRTPVQRTPLSAAAHTHPVYCVNVVGTQNAHNLISISTDGKICSWSLDMLSHPQDSMELVHKQSKAVAVTSMSFPVGDVNNFVVGSEEGSVYTACRHGSKAGISEMFEGHQGPITGIHCHAAVGAVDFSHLFVTSSFDWTVKLWTTKNNKPLYSFEDNSDYVYDVMWSPTHPALFACVDGMGRLDLWNLNNDTEVPTASISVEGNPALNRVRWTHSGREIAVGDSEGQIVIYDVGEQIAVPRNDEWARFGRTLAEINANRADAEEEAATRIPA.

2 stretches are compositionally biased toward basic and acidic residues: residues 1–13 and 20–43; these read MSDK…ELER and QIRE…KKEA. The tract at residues 1-188 is disordered; the sequence is MSDKSDLKAE…PHELTEEEKQ (188 aa). Ser-2 is modified (N-acetylserine). At Ser-51 the chain carries Diphosphoserine. 2 positions are modified to phosphoserine: Ser-51 and Ser-84. Positions 82 to 91 are enriched in low complexity; that stretch reads PSSKSVSTPS. At Thr-89 the chain carries Phosphothreonine. Phosphoserine is present on residues Ser-91, Ser-95, and Ser-98. Residues 164-188 are compositionally biased toward basic and acidic residues; the sequence is EKTLKKDEENDSKAPPHELTEEEKQ. WD repeat units lie at residues 251-300, 304-344, 353-394, 403-443, 448-493, 496-536, and 542-581; these read SKHR…TTPE, HCQS…RTPV, AHTH…HPQD, SKAV…AGIS, GHQG…PLYS, DNSD…EVPT, and EGNP…AVPR.

The protein belongs to the dynein intermediate chain family. Homodimer. The cytoplasmic dynein 1 complex consists of two catalytic heavy chains (HCs) and a number of non-catalytic subunits presented by intermediate chains (ICs), light intermediate chains (LICs) and light chains (LCs); the composition seems to vary in respect to the IC, LIC and LC composition. The heavy chain homodimer serves as a scaffold for the probable homodimeric assembly of the respective non-catalytic subunits. The ICs and LICs bind directly to the HC dimer and the LCs assemble on the IC dimer. Interacts with DYNLT3. Interacts with DYNLT1. Interacts (dephosphorylated at Ser-84) with DCTN1. Interacts with BICD2. Interacts with SPEF2. Interacts with CFAP61. In terms of processing, the phosphorylation status of Ser-84 appears to be involved in dynactin-dependent target binding. Post-translationally, pyrophosphorylation by 5-diphosphoinositol pentakisphosphate (5-IP7) promotes interaction with DCTN1. Serine pyrophosphorylation is achieved by Mg(2+)-dependent, but enzyme independent transfer of a beta-phosphate from a inositol pyrophosphate to a pre-phosphorylated serine residue.

It localises to the cytoplasm. The protein resides in the cytoskeleton. Functionally, acts as one of several non-catalytic accessory components of the cytoplasmic dynein 1 complex that are thought to be involved in linking dynein to cargos and to adapter proteins that regulate dynein function. Cytoplasmic dynein 1 acts as a motor for the intracellular retrograde motility of vesicles and organelles along microtubules. The intermediate chains mediate the binding of dynein to dynactin via its 150 kDa component (p150-glued) DCTN1. Involved in membrane-transport, such as Golgi apparatus, late endosomes and lysosomes. This Mus musculus (Mouse) protein is Cytoplasmic dynein 1 intermediate chain 2 (Dync1i2).